The primary structure comprises 237 residues: MTPQDFYRTLEEDGFSLSSKQKEQFDTYFKLLVEWNTKINLTAITEENEVYLKHFYDSIAPILQGFLANEPIKLLDIGAGAGFPSLPMKILFPNLEVTIIDSLNKRISFLTLLAQELGLENVHFFHGRAEDFGQDKAFRGQFDAVTARAVARMQVLSELTIPFLKIRGKLIALKAQAADQELEEAKNALCLLFGKVIKNHSYQLPNGDSRFITIVEKKKETPNKYPRKAGLPNKKPL.

Residues G78, F83, A129 to E130, and R148 each bind S-adenosyl-L-methionine.

Belongs to the methyltransferase superfamily. RNA methyltransferase RsmG family.

It localises to the cytoplasm. Its function is as follows. Specifically methylates the N7 position of a guanine in 16S rRNA. The sequence is that of Ribosomal RNA small subunit methyltransferase G from Streptococcus pyogenes serotype M6 (strain ATCC BAA-946 / MGAS10394).